Here is an 85-residue protein sequence, read N- to C-terminus: Small ribosomal subunit protein uS15c (85 aa).

The protein belongs to the universal ribosomal protein uS15 family. Part of the 30S ribosomal subunit.

It is found in the plastid. The protein resides in the chloroplast. The protein is Small ribosomal subunit protein uS15c (rps15) of Chaetosphaeridium globosum (Charophycean green alga).